Here is a 321-residue protein sequence, read N- to C-terminus: Putative glucan endo-1,3-beta-glucosidase GVI (321 aa).

A signal peptide spans 1–6; it reads LAGVEG. The active-site Proton donor is the glutamate 100. The active-site Nucleophile is the glutamate 241.

It belongs to the glycosyl hydrolase 17 family.

The catalysed reaction is Hydrolysis of (1-&gt;3)-beta-D-glucosidic linkages in (1-&gt;3)-beta-D-glucans.. In terms of biological role, may provide a degree of protection against microbial invasion of germinated barley grain through its ability to degrade fungal cell wall polysaccharides. This Hordeum vulgare (Barley) protein is Putative glucan endo-1,3-beta-glucosidase GVI.